We begin with the raw amino-acid sequence, 329 residues long: DNA-directed RNA polymerase subunit alpha (329 aa).

The segment at 1-234 is alpha N-terminal domain (alpha-NTD); it reads MQGSVTEFLK…EQLDAFVELR (234 aa). Residues 248–329 are alpha C-terminal domain (alpha-CTD); that stretch reads FDPILLRPVD…WPPASLADDL (82 aa).

It belongs to the RNA polymerase alpha chain family. As to quaternary structure, homodimer. The RNAP catalytic core consists of 2 alpha, 1 beta, 1 beta' and 1 omega subunit. When a sigma factor is associated with the core the holoenzyme is formed, which can initiate transcription.

It carries out the reaction RNA(n) + a ribonucleoside 5'-triphosphate = RNA(n+1) + diphosphate. Functionally, DNA-dependent RNA polymerase catalyzes the transcription of DNA into RNA using the four ribonucleoside triphosphates as substrates. The sequence is that of DNA-directed RNA polymerase subunit alpha from Shewanella putrefaciens (strain CN-32 / ATCC BAA-453).